Here is a 252-residue protein sequence, read N- to C-terminus: tRNA1(Val) (adenine(37)-N6)-methyltransferase (252 aa).

It belongs to the methyltransferase superfamily. tRNA (adenine-N(6)-)-methyltransferase family.

It is found in the cytoplasm. It carries out the reaction adenosine(37) in tRNA1(Val) + S-adenosyl-L-methionine = N(6)-methyladenosine(37) in tRNA1(Val) + S-adenosyl-L-homocysteine + H(+). In terms of biological role, specifically methylates the adenine in position 37 of tRNA(1)(Val) (anticodon cmo5UAC). The polypeptide is tRNA1(Val) (adenine(37)-N6)-methyltransferase (Proteus mirabilis (strain HI4320)).